Here is a 287-residue protein sequence, read N- to C-terminus: uncharacterized protein (287 aa).

The next 7 membrane-spanning stretches (helical) occupy residues 27–47 (LTFS…FGVQ), 66–86 (LGTI…VTAF), 97–117 (WFWG…GVLL), 135–155 (IVFA…LSAL), 171–191 (IFIW…VLNF), 205–225 (LFPG…VYFV), and 254–274 (SALF…YFIL).

It localises to the cell membrane. This is an uncharacterized protein from Mycoplasma pneumoniae (strain ATCC 29342 / M129 / Subtype 1) (Mycoplasmoides pneumoniae).